The chain runs to 59 residues: Potassium channel toxin alpha-KTx 3.10 (59 aa).

The N-terminal stretch at 1–22 (MKVFFAVLIALFVCSMVIGIHG) is a signal peptide. 3 cysteine pairs are disulfide-bonded: Cys30–Cys50, Cys36–Cys55, and Cys40–Cys57.

The protein belongs to the short scorpion toxin superfamily. Potassium channel inhibitor family. Alpha-KTx 03 subfamily. In terms of tissue distribution, expressed by the venom gland.

It is found in the secreted. In terms of biological role, inhibits insect potassium channel. Is at least a 100-fold more potent against the Drosophila Shaker channel than towards its mammalian homologs Kv1.1/KCNA1 and Kv1.3/KCNA3. The chain is Potassium channel toxin alpha-KTx 3.10 from Buthus israelis (Israeli scorpion).